We begin with the raw amino-acid sequence, 505 residues long: MEIDWQIGPASEWRADALIFFGLEEATEPLPGFKRWLDQHGQWLSASPVLRDFQGKYQEVAVCYGPPEANIPRVVMAGLGTREKFDMERLQGSAAAALNRCRELRLARPAFCLRSFYGLPLMVDSALKEALIGGLTGLHRYEELKTRDIAPSAAPSRLVVLNEYETTPELRALPGAAAAAAAGIILARDLVSSPANRATPAFLADCARRLADRDGCRIEVIGLEKAESMGMGGFAAVARGSRQPACMIVLERFPEADRRESPIVFVGKGITFDTGGISLKPRDHLEEMKQDMAGAAAVLGAFETLGRLGSDRHVVGIMPCTENMPGGNAYKPGDVIRTMSGLTVEVISTDAEGRMVLCDALTYAMRYKPAAVFDIATLTAAVIIALGQRVAAVMANRDILAEAVVDIGAQVGERLWPLPLYDLYFDYLKSDVADFKNVGDRTAGSIVGGMFLKQFVPDTTPWAHLDIAGTAWTDKDLGTTPRGGTGFGVRTLTELALQWPDLGIR.

Residues lysine 268 and aspartate 273 each contribute to the Mn(2+) site. Lysine 280 is an active-site residue. Mn(2+) is bound by residues aspartate 291, aspartate 350, and glutamate 352. Arginine 354 is an active-site residue.

Belongs to the peptidase M17 family. Requires Mn(2+) as cofactor.

It localises to the cytoplasm. It catalyses the reaction Release of an N-terminal amino acid, Xaa-|-Yaa-, in which Xaa is preferably Leu, but may be other amino acids including Pro although not Arg or Lys, and Yaa may be Pro. Amino acid amides and methyl esters are also readily hydrolyzed, but rates on arylamides are exceedingly low.. The catalysed reaction is Release of an N-terminal amino acid, preferentially leucine, but not glutamic or aspartic acids.. Presumably involved in the processing and regular turnover of intracellular proteins. Catalyzes the removal of unsubstituted N-terminal amino acids from various peptides. In Syntrophobacter fumaroxidans (strain DSM 10017 / MPOB), this protein is Probable cytosol aminopeptidase.